A 305-amino-acid polypeptide reads, in one-letter code: Mitochondrial thiamine pyrophosphate carrier 1 (305 aa).

6 helical membrane-spanning segments follow: residues 16–32 (VSPY…GAVA), 84–100 (ILYV…YSSI), 122–142 (LVSG…FDLL), 169–193 (GFTG…LMFW), 213–229 (ICGF…TFPL), and 270–287 (GFGI…VSLF). 3 Solcar repeats span residues 16–103 (VSPY…ISRW), 116–201 (PSSA…VRET), and 206–295 (DIPF…SLAA).

The protein belongs to the mitochondrial carrier (TC 2.A.29) family.

It localises to the mitochondrion inner membrane. Functionally, mitochondrial transporter that mediates uptake of thiamine pyrophosphate (ThPP) into mitochondria. This chain is Mitochondrial thiamine pyrophosphate carrier 1 (TPC1), found in Scheffersomyces stipitis (strain ATCC 58785 / CBS 6054 / NBRC 10063 / NRRL Y-11545) (Yeast).